A 433-amino-acid chain; its full sequence is MHDLKAIRDDAAAFGAAMRRRGLAGPEGADEGAAAPIRALDEERRRAQTELQGHETRRNELARAIGQAKRAGEDTTALEAEGTALRQSIETANAWLAESARKLDELLAVLPNVLDADVPDGPDETANVEQKRVGAPPSFDFEARQHFELGEALGLMDFAGAAKLAGARFTVLRGDLARLERALGQFMLDLHVNEHGYTEVSPPLLVNDATMYGTGQLPKFAEDLFRTTDGRWLIPTAEVPLTNLAAGEILDAASLPLRMTALTPSFRSEAGSAGRDTRGMLRQHQFWKVELVSLTTPEASADEHERMTSCAESVLERLGLPYRRMLLCAGDTGFSSAKTYDLEVWLPGQGAYREISSCSNCRAFQARRMNARYRPPQTGPKPAKPDFVHTLNGSGVATGRALIAVMENYQNADGSITVPDALRPYMRGCDRIG.

L-serine is bound at residue 236–238; it reads TAE. Residue 267-269 participates in ATP binding; sequence RSE. Glu290 contacts L-serine. 354–357 is an ATP binding site; the sequence is EISS. Position 394 (Ser394) interacts with L-serine.

The protein belongs to the class-II aminoacyl-tRNA synthetase family. Type-1 seryl-tRNA synthetase subfamily. In terms of assembly, homodimer. The tRNA molecule binds across the dimer.

It is found in the cytoplasm. It catalyses the reaction tRNA(Ser) + L-serine + ATP = L-seryl-tRNA(Ser) + AMP + diphosphate + H(+). It carries out the reaction tRNA(Sec) + L-serine + ATP = L-seryl-tRNA(Sec) + AMP + diphosphate + H(+). The protein operates within aminoacyl-tRNA biosynthesis; selenocysteinyl-tRNA(Sec) biosynthesis; L-seryl-tRNA(Sec) from L-serine and tRNA(Sec): step 1/1. Functionally, catalyzes the attachment of serine to tRNA(Ser). Is also able to aminoacylate tRNA(Sec) with serine, to form the misacylated tRNA L-seryl-tRNA(Sec), which will be further converted into selenocysteinyl-tRNA(Sec). In Acidiphilium cryptum (strain JF-5), this protein is Serine--tRNA ligase.